The chain runs to 434 residues: Serine hydroxymethyltransferase 2 (434 aa).

(6S)-5,6,7,8-tetrahydrofolate-binding positions include leucine 136 and 140 to 142 (GHL). N6-(pyridoxal phosphate)lysine is present on lysine 245.

This sequence belongs to the SHMT family. In terms of assembly, homodimer. Pyridoxal 5'-phosphate serves as cofactor.

The protein localises to the cytoplasm. The enzyme catalyses (6R)-5,10-methylene-5,6,7,8-tetrahydrofolate + glycine + H2O = (6S)-5,6,7,8-tetrahydrofolate + L-serine. The protein operates within one-carbon metabolism; tetrahydrofolate interconversion. It participates in amino-acid biosynthesis; glycine biosynthesis; glycine from L-serine: step 1/1. Its function is as follows. Catalyzes the reversible interconversion of serine and glycine with tetrahydrofolate (THF) serving as the one-carbon carrier. This reaction serves as the major source of one-carbon groups required for the biosynthesis of purines, thymidylate, methionine, and other important biomolecules. Also exhibits THF-independent aldolase activity toward beta-hydroxyamino acids, producing glycine and aldehydes, via a retro-aldol mechanism. The sequence is that of Serine hydroxymethyltransferase 2 from Rhodopseudomonas palustris (strain ATCC BAA-98 / CGA009).